We begin with the raw amino-acid sequence, 561 residues long: Acylcarnitine hydrolase (561 aa).

The signal sequence occupies residues 1–26 (MARKQPHSWLNAVLFGLLLILIHVWG). A disulfide bond links C97 and C125. Catalysis depends on S230, which acts as the Acyl-ester intermediate. The cysteines at positions 282 and 293 are disulfide-linked. Residues E347 and H459 each act as charge relay system in the active site.

This sequence belongs to the type-B carboxylesterase/lipase family. In terms of tissue distribution, expressed in liver, stomach and kidney.

The protein localises to the microsome. It is found in the endoplasmic reticulum. The enzyme catalyses all-trans-retinyl hexadecanoate + H2O = all-trans-retinol + hexadecanoate + H(+). It catalyses the reaction an O-acyl-(R)-carnitine + H2O = (R)-carnitine + a fatty acid + H(+). Hydrolase with high activity towards palmitoylcarnitine. Is also active with p-nitrophenylacetate and alpha-naphthylacetate. May also hydrolyze retinyl esters. This chain is Acylcarnitine hydrolase, found in Rattus norvegicus (Rat).